Here is a 1659-residue protein sequence, read N- to C-terminus: eIF-2-alpha kinase GCN2 (1659 aa).

One can recognise an RWD domain in the interval 17–128 (NELEAIRSIY…SFTQEKLDEF (112 aa)). A disordered region spans residues 149–170 (KEQLEKEEREKQQETIKKRSDE). Protein kinase domains are found at residues 256-527 (LVKP…MKFL) and 599-981 (FEEI…SGWL). ATP contacts are provided by residues 605-613 (LGQGAFGQV) and lysine 628. Disordered regions lie at residues 671–691 (NVFE…DFEE) and 727–768 (FENS…VPRR). Serine 761 carries the phosphoserine modification. Aspartate 835 serves as the catalytic Proton acceptor. Phosphothreonine; by autocatalysis occurs at positions 882 and 887. The segment at 999-1519 (NPSSPWQQQV…EFKRWDENSS (521 aa)) is histidyl-tRNA synthetase-like.

This sequence belongs to the protein kinase superfamily. Ser/Thr protein kinase family. GCN2 subfamily. Homodimer; homodimerization is important for kinase activation by uncharged tRNAs. Interacts (via N-terminal RWD domain) with GCN1 (via N- and C-terminus); this interaction stimulates GCN2 kinase activity in a GCN20-dependent manner in response to amino acid starvation. Interacts (via N-terminus) with the GCN1-GCN20 complex on translating ribosomes in amino acid-starved cells; GCN1 may bind near the ribosomal A-site and promotes the transfer of uncharged tRNAs from the A-site to the tRNA-binding domain in GCN2 for its subsequent kinase activation, and hence allowing GCN4 translational activation and derepression of amino acid biosynthetic genes. Interacts (via C-terminus) with TIF11; this interaction is direct, occurs in amino acid-repleted cells, may be stabilized in a ribosome-dependent manner, reduces GCN2-mediated eIF-2-alpha phosphorylation but not GCN2 autophosphorylation and is lost in amino acid-starved cells and by uncharged tRNAs. Associates (via C-terminus) with ribosomes. The cofactor is Mg(2+). In terms of processing, autophosphorylated, autophosphorylation on Thr-882 and Thr-887 increases kinase activity.

Its subcellular location is the cytoplasm. The catalysed reaction is L-seryl-[protein] + ATP = O-phospho-L-seryl-[protein] + ADP + H(+). The enzyme catalyses L-threonyl-[protein] + ATP = O-phospho-L-threonyl-[protein] + ADP + H(+). The integrated stress response (ISR) is activated in response to conditions that promote ribosome collisions: GCN1, which acts as a ribosome collision sensor, activates GCN2. The RQC pathway and the integrated stress response (ISR) antagonize each other: HEL2 prevents the activation of GCN2, while GCN2 suppresses RQC activation. Ribosome stalling-induced integrated stress response prefers ribosomes with empty A sites. The kinase activity is stimulated upon binding to uncharged tRNAs. In terms of biological role, metabolic-stress sensing protein kinase that phosphorylates the alpha subunit of eukaryotic translation initiation factor 2 (eIF-2-alpha/SUI2) on 'Ser-52' in response to low amino acid, carbon, or purine availability. Required for adapatation to nutrient starvation by acting as a key component of the integrated stress response (ISR), by which cells alter their translational and transcriptional output in response to starvation. Converts phosphorylated eIF-2-alpha/SUI2 either to a competitive inhibitor of translation initiation factor eIF-2B, leading to a global protein synthesis repression, and thus to a reduced overall utilization of amino acids, or to a translational initiation activation of specific mRNAs, such as the transcriptional activator GCN4, and hence allowing GCN4-mediated reprogramming of transcription to alleviate nutrient depletion. Binds uncharged tRNAs. Binds to aminoacylated tRNA(Phe) less tightly than to deacylated tRNA(Phe). Binds to double-stranded RNA. The sequence is that of eIF-2-alpha kinase GCN2 from Saccharomyces cerevisiae (strain ATCC 204508 / S288c) (Baker's yeast).